The sequence spans 173 residues: MTIAKDMMVNDGIRARELRLIGQDGEQLGVKTKAEALQIAESANLDLVLVAPGAKPPVARIMDYGKFRFEQQKKEREARKKQKVINVKEVRLSPTIDVNDFNTKLRNARKFLEKGDKVKASIRFKGRAITHKEIGQKVLDRLAEETADIATVEQKAKMDGRSMFLTLAPKNDK.

Belongs to the IF-3 family. Monomer.

It localises to the cytoplasm. Its function is as follows. IF-3 binds to the 30S ribosomal subunit and shifts the equilibrium between 70S ribosomes and their 50S and 30S subunits in favor of the free subunits, thus enhancing the availability of 30S subunits on which protein synthesis initiation begins. This is Translation initiation factor IF-3 from Enterococcus faecalis (strain ATCC 700802 / V583).